Reading from the N-terminus, the 498-residue chain is Galactose-1-phosphate uridylyltransferase (498 aa).

It belongs to the galactose-1-phosphate uridylyltransferase type 2 family.

Its subcellular location is the cytoplasm. The catalysed reaction is alpha-D-galactose 1-phosphate + UDP-alpha-D-glucose = alpha-D-glucose 1-phosphate + UDP-alpha-D-galactose. It participates in carbohydrate metabolism; galactose metabolism. The chain is Galactose-1-phosphate uridylyltransferase from Latilactobacillus sakei subsp. sakei (strain 23K) (Lactobacillus sakei subsp. sakei).